The primary structure comprises 487 residues: N-succinylglutamate 5-semialdehyde dehydrogenase (487 aa).

221–226 (GSSDTG) is an NAD(+) binding site. Active-site residues include glutamate 244 and cysteine 278.

The protein belongs to the aldehyde dehydrogenase family. AstD subfamily.

The catalysed reaction is N-succinyl-L-glutamate 5-semialdehyde + NAD(+) + H2O = N-succinyl-L-glutamate + NADH + 2 H(+). It participates in amino-acid degradation; L-arginine degradation via AST pathway; L-glutamate and succinate from L-arginine: step 4/5. Its function is as follows. Catalyzes the NAD-dependent reduction of succinylglutamate semialdehyde into succinylglutamate. In Burkholderia cenocepacia (strain ATCC BAA-245 / DSM 16553 / LMG 16656 / NCTC 13227 / J2315 / CF5610) (Burkholderia cepacia (strain J2315)), this protein is N-succinylglutamate 5-semialdehyde dehydrogenase.